A 644-amino-acid polypeptide reads, in one-letter code: 1-deoxy-D-xylulose-5-phosphate synthase (644 aa).

Thiamine diphosphate-binding positions include histidine 78 and 120–122 (GHA). Aspartate 150 serves as a coordination point for Mg(2+). Thiamine diphosphate is bound by residues 151–152 (AA), asparagine 179, and glutamate 374. Residue asparagine 179 participates in Mg(2+) binding.

The protein belongs to the transketolase family. DXPS subfamily. As to quaternary structure, homodimer. It depends on Mg(2+) as a cofactor. Thiamine diphosphate is required as a cofactor.

The enzyme catalyses D-glyceraldehyde 3-phosphate + pyruvate + H(+) = 1-deoxy-D-xylulose 5-phosphate + CO2. Its pathway is metabolic intermediate biosynthesis; 1-deoxy-D-xylulose 5-phosphate biosynthesis; 1-deoxy-D-xylulose 5-phosphate from D-glyceraldehyde 3-phosphate and pyruvate: step 1/1. Functionally, catalyzes the acyloin condensation reaction between C atoms 2 and 3 of pyruvate and glyceraldehyde 3-phosphate to yield 1-deoxy-D-xylulose-5-phosphate (DXP). In Chlamydia pneumoniae (Chlamydophila pneumoniae), this protein is 1-deoxy-D-xylulose-5-phosphate synthase.